The sequence spans 159 residues: 6,7-dimethyl-8-ribityllumazine synthase (159 aa).

5-amino-6-(D-ribitylamino)uracil-binding positions include Trp26, 58–60 (AIE), and 80–82 (VVI). Residue 85 to 86 (ET) participates in (2S)-2-hydroxy-3-oxobutyl phosphate binding. His88 functions as the Proton donor in the catalytic mechanism. Position 113 (Asn113) interacts with 5-amino-6-(D-ribitylamino)uracil. Residue Arg127 participates in (2S)-2-hydroxy-3-oxobutyl phosphate binding.

Belongs to the DMRL synthase family. As to quaternary structure, homopentamer.

The catalysed reaction is (2S)-2-hydroxy-3-oxobutyl phosphate + 5-amino-6-(D-ribitylamino)uracil = 6,7-dimethyl-8-(1-D-ribityl)lumazine + phosphate + 2 H2O + H(+). Its pathway is cofactor biosynthesis; riboflavin biosynthesis; riboflavin from 2-hydroxy-3-oxobutyl phosphate and 5-amino-6-(D-ribitylamino)uracil: step 1/2. Catalyzes the formation of 6,7-dimethyl-8-ribityllumazine by condensation of 5-amino-6-(D-ribitylamino)uracil with 3,4-dihydroxy-2-butanone 4-phosphate. This is the penultimate step in the biosynthesis of riboflavin. This chain is 6,7-dimethyl-8-ribityllumazine synthase, found in Mycolicibacterium gilvum (strain PYR-GCK) (Mycobacterium gilvum (strain PYR-GCK)).